The chain runs to 289 residues: Serine/threonine-protein phosphatase Pgam5, mitochondrial (289 aa).

Residues 7 to 23 traverse the membrane as a helical segment; sequence FVCGTGAGLAAYYLQRL.

The protein belongs to the phosphoglycerate mutase family. BPG-dependent PGAM subfamily. As to quaternary structure, interacts with Pk92B/ASK1.

It is found in the mitochondrion outer membrane. It carries out the reaction O-phospho-L-seryl-[protein] + H2O = L-seryl-[protein] + phosphate. The enzyme catalyses O-phospho-L-threonyl-[protein] + H2O = L-threonyl-[protein] + phosphate. Displays phosphatase activity for serine/threonine residues, and dephosphorylates and activates Pk92B kinase. Has apparently no phosphoglycerate mutase activity. The polypeptide is Serine/threonine-protein phosphatase Pgam5, mitochondrial (Pgam5) (Drosophila melanogaster (Fruit fly)).